The following is a 1119-amino-acid chain: Solute carrier family 38 member 10 (1119 aa).

The next 10 helical transmembrane spans lie at 4 to 24 (AAAS…GVSV), 36 to 58 (IVLG…MFLV), 84 to 104 (LVET…YVVI), 120 to 140 (VGGT…VLPL), 153 to 173 (FSAM…LSSL), 229 to 249 (IFAS…FFGY), 272 to 292 (MLRV…ILPC), 323 to 343 (ALTL…PNVE), 345 to 365 (ILGL…PALI), and 378 to 398 (VVLW…LSVS). Disordered regions lie at residues 438-691 (AEDG…EEAG) and 731-1071 (KEIH…DGVI). 5 stretches are compositionally biased toward basic and acidic residues: residues 439-454 (EDGR…REEL), 466-475 (PGREDGKEAP), 493-522 (EAHR…ENKP), 544-559 (DSER…EVGK), and 592-603 (AKEDLGPGDRGL). Serine 612 is modified (phosphoserine). The span at 652 to 667 (PPLPAEKPAPGPGLPP) shows a compositional bias: pro residues. Composition is skewed to basic and acidic residues over residues 668 to 677 (EPREQRDVER), 731 to 752 (KEIH…EVHQ), and 763 to 773 (EAPEGKARETV). The residue at position 772 (threonine 772) is a Phosphothreonine. Residue serine 802 is modified to Phosphoserine. 2 stretches are compositionally biased toward basic and acidic residues: residues 832-841 (KLRDGQKDAA) and 863-876 (PARE…RLAE). Residues 880-889 (GQSQDVTGGS) are compositionally biased toward polar residues. Residues serine 889, serine 965, and serine 997 each carry the phosphoserine modification. Basic and acidic residues-rich tracts occupy residues 975 to 1005 (HRLD…RGGE), 1012 to 1022 (PRQRPEPELGL), and 1033 to 1042 (DNAKPNRDLK).

Belongs to the amino acid/polyamine transporter 2 family.

The protein resides in the membrane. It catalyses the reaction L-glutamate(out) = L-glutamate(in). It carries out the reaction L-glutamine(out) = L-glutamine(in). The catalysed reaction is L-alanine(in) = L-alanine(out). The enzyme catalyses L-serine(in) = L-serine(out). It catalyses the reaction L-leucine(in) = L-leucine(out). Its function is as follows. Facilitates bidirectional transport of amino acids. May act as a glutamate sensor that regulates glutamate-glutamine cycle and mTOR signaling in the brain. The transport mechanism remains to be elucidated. The polypeptide is Solute carrier family 38 member 10 (Homo sapiens (Human)).